A 122-amino-acid chain; its full sequence is Ribonuclease P protein component (122 aa).

Belongs to the RnpA family. As to quaternary structure, consists of a catalytic RNA component (M1 or rnpB) and a protein subunit.

It carries out the reaction Endonucleolytic cleavage of RNA, removing 5'-extranucleotides from tRNA precursor.. RNaseP catalyzes the removal of the 5'-leader sequence from pre-tRNA to produce the mature 5'-terminus. It can also cleave other RNA substrates such as 4.5S RNA. The protein component plays an auxiliary but essential role in vivo by binding to the 5'-leader sequence and broadening the substrate specificity of the ribozyme. This Roseiflexus sp. (strain RS-1) protein is Ribonuclease P protein component.